The following is a 79-amino-acid chain: Protein OPG081 (79 aa).

The Intravirion segment spans residues 2-8 (VDAITVL). A helical transmembrane segment spans residues 9-29 (TAIGITVLMLLMVISGAALIV). The Virion surface segment spans residues 30-47 (KELNPNDIFTMQSLKFNR). Residues 48 to 68 (AVTIFKYIGLFIYIPGTIILY) traverse the membrane as a helical segment. The Intravirion portion of the chain corresponds to 69-79 (ATYVKSLLMKS).

Belongs to the orthopoxvirus OPG081 family.

It localises to the virion membrane. Its function is as follows. Envelope protein. In Vaccinia virus (strain Western Reserve) (VACV), this protein is Protein OPG081 (OPG081).